The chain runs to 308 residues: Ribosomal protein L11 methyltransferase (308 aa).

The S-adenosyl-L-methionine site is built by Thr157, Gly178, Asp200, and Asn243.

It belongs to the methyltransferase superfamily. PrmA family.

The protein localises to the cytoplasm. The enzyme catalyses L-lysyl-[protein] + 3 S-adenosyl-L-methionine = N(6),N(6),N(6)-trimethyl-L-lysyl-[protein] + 3 S-adenosyl-L-homocysteine + 3 H(+). Its function is as follows. Methylates ribosomal protein L11. This is Ribosomal protein L11 methyltransferase from Desulforamulus reducens (strain ATCC BAA-1160 / DSM 100696 / MI-1) (Desulfotomaculum reducens).